A 908-amino-acid polypeptide reads, in one-letter code: Glutamate receptor ionotropic, kainate 2 (908 aa).

Residues 1–31 form the signal peptide; it reads MKIISPVLSNLVFSRSIKVLLCLLWIGYSQG. Topologically, residues 32–561 are extracellular; the sequence is TTHVLRFGGI…VFSFLNPLSP (530 aa). Residues Asn67, Asn73, Asn275, Asn378, Asn412, Asn423, and Asn430 are each glycosylated (N-linked (GlcNAc...) asparagine). Cys96 and Cys347 form a disulfide bridge. 3 residues coordinate L-glutamate: Pro516, Ala518, and Arg523. Asn546 carries N-linked (GlcNAc...) asparagine glycosylation. A helical transmembrane segment spans residues 562–582; sequence DIWMYILLAYLGVSCVLFVIA. Residues 583–638 are Cytoplasmic-facing; the sequence is RFSPYEWYNPHPCNPDSDVVENNFTLLNSFWFGVGALMQQGSELMPKALSTRIVGG. The chain crosses the membrane as a helical span at residues 639-659; sequence IWWFFTLIIISSYTANLAAFL. At 660–819 the chain is on the extracellular side; sequence TVERMESPID…KEASALGVQN (160 aa). Ala689, Thr690, and Glu738 together coordinate L-glutamate. The cysteines at positions 750 and 804 are disulfide-linked. The N-linked (GlcNAc...) asparagine glycan is linked to Asn751. Residues 820–840 traverse the membrane as a helical segment; the sequence is IGGIFIVLAAGLVLSVFVAVG. The Cytoplasmic portion of the chain corresponds to 841–908; sequence EFLYKSKKNA…RRLPGKETMA (68 aa). A phosphoserine; by PKC mark is found at Ser846 and Ser868. Lys886 participates in a covalent cross-link: Glycyl lysine isopeptide (Lys-Gly) (interchain with G-Cter in SUMO1).

It belongs to the glutamate-gated ion channel (TC 1.A.10.1) family. GRIK2 subfamily. Homotetramer and heterotetramer with GRIK5. Tetramers may be formed by the dimerization of dimers. Assembles into a kainate-gated homomeric channel that does not bind AMPA. Can form functional heteromeric receptors with GRIK3. Forms a heteromeric complex with GRIK4 and GRIK5. Interacts with DLG4. Interacts (via C-terminus) with KLHL17 (via kelch repeats); the interaction targets GRIK2 for degradation via ubiquitin-proteasome pathway. Interacts with NETO2. Post-translationally, sumoylation mediates kainate receptor-mediated endocytosis and regulates synaptic transmission. Sumoylation is enhanced by PIAS3 and desumoylated by SENP1. In terms of processing, ubiquitinated. Ubiquitination regulates the GRIK2 levels at the synapse by leading kainate receptor degradation through proteasome. Phosphorylated by PKC at Ser-868 upon agonist activation, this directly enhance sumoylation. As to expression, expressed in the hippocampal mossy fiber synapses (at protein level). Most abundant in the cerebellum and the hypothalamus. Expressed in a proportion of dorsal root ganglion (DRG) neurons (13.6%); predominantly small diameter DRG neurons (75%) with the remainder expressed in medium diameter DRG neurons.

The protein resides in the cell membrane. The protein localises to the postsynaptic cell membrane. It catalyses the reaction Ca(2+)(in) = Ca(2+)(out). The catalysed reaction is Na(+)(in) = Na(+)(out). With respect to regulation, cold receptor activity activated by temperatures between 10-19 degrees Celsius. Ionotropic glutamate receptor that functions as a cation-permeable ligand-gated ion channel, gated by L-glutamate and the glutamatergic agonist kainic acid. L-glutamate acts as an excitatory neurotransmitter at many synapses in the central nervous system. Binding of the excitatory neurotransmitter L-glutamate induces a conformation change, leading to the opening of the cation channel, and thereby converts the chemical signal to an electrical impulse. The receptor then desensitizes rapidly and enters a transient inactive state, characterized by the presence of bound agonist. Modulates cell surface expression of NETO2. In association with GRIK3, involved in presynaptic facilitation of glutamate release at hippocampal mossy fiber synapses. In terms of biological role, independent of its ionotropic glutamate receptor activity, acts as a thermoreceptor conferring sensitivity to cold temperatures. Functions in dorsal root ganglion neurons. Its function is as follows. Ionotropic glutamate receptor that functions as a cation-permeable ligand-gated ion channel, gated by L-glutamate and the glutamatergic agonist kainic acid. This chain is Glutamate receptor ionotropic, kainate 2 (Grik2), found in Mus musculus (Mouse).